Reading from the N-terminus, the 297-residue chain is Large ribosomal subunit protein uL18 (297 aa).

Residue G2 is modified to N-acetylglycine. K5 and K48 each carry N6-acetyllysine. A Phosphoserine modification is found at S185. K220 is subject to N6-acetyllysine; alternate. Residue K220 forms a Glycyl lysine isopeptide (Lys-Gly) (interchain with G-Cter in SUMO1); alternate linkage. A Glycyl lysine isopeptide (Lys-Gly) (interchain with G-Cter in SUMO2); alternate cross-link involves residue K220. Phosphothreonine is present on T232. The disordered stretch occupies residues 253-297; it reads YEKKPKREVKKKRWNRPKMSLAQKKDRVAQKKASFLRAQERAAES. The segment covering 258–268 has biased composition (basic residues); the sequence is KREVKKKRWNR. S272 carries the phosphoserine modification.

The protein belongs to the universal ribosomal protein uL18 family. Component of the large ribosomal subunit (LSU). Part of the 5S RNP complex, which is a LSU subcomplex composed of the 5S RNA, RPL5 and RPL11. Component of a hexameric 5S RNP precursor complex, composed of 5S RNA, RRS1, RPF2/BXDC1, RPL5, RPL11 and HEATR3; this complex acts as a precursor for ribosome assembly. Interacts with isoform 1 of NVL in an ATP-dependent manner. Interacts with RRP1B. Interacts with IPO5, IPO7 and KPNB1; these interactions may be involved in RPL5 nuclear import for the assembly of ribosomal subunits.

Its subcellular location is the cytoplasm. The protein localises to the nucleus. It is found in the nucleolus. In terms of biological role, component of the ribosome, a large ribonucleoprotein complex responsible for the synthesis of proteins in the cell. The small ribosomal subunit (SSU) binds messenger RNAs (mRNAs) and translates the encoded message by selecting cognate aminoacyl-transfer RNA (tRNA) molecules. The large subunit (LSU) contains the ribosomal catalytic site termed the peptidyl transferase center (PTC), which catalyzes the formation of peptide bonds, thereby polymerizing the amino acids delivered by tRNAs into a polypeptide chain. The nascent polypeptides leave the ribosome through a tunnel in the LSU and interact with protein factors that function in enzymatic processing, targeting, and the membrane insertion of nascent chains at the exit of the ribosomal tunnel. As part of the 5S RNP/5S ribonucleoprotein particle it is an essential component of the LSU, required for its formation and the maturation of rRNAs. It also couples ribosome biogenesis to p53/TP53 activation. As part of the 5S RNP it accumulates in the nucleoplasm and inhibits MDM2, when ribosome biogenesis is perturbed, mediating the stabilization and the activation of TP53. The protein is Large ribosomal subunit protein uL18 (RPL5) of Oryctolagus cuniculus (Rabbit).